The following is a 469-amino-acid chain: Keratin, type II cytoskeletal 7 (469 aa).

Position 2 is an N-acetylserine (serine 2). A phosphoserine mark is found at serine 2, serine 6, and serine 7. The tract at residues 2-90 (SIHFSSPVFT…DPSLQRVRQE (89 aa)) is head. O-linked (GlcNAc) serine glycosylation is present at serine 12. Arginine 20 bears the Dimethylated arginine; alternate mark. At arginine 20 the chain carries Omega-N-methylarginine; alternate. Phosphoserine occurs at positions 53, 71, and 83. A coil 1A region spans residues 90 to 126 (EEREQIKTLNNKFASFIDKVRFLEQQNKLLETKWTLL). The 313-residue stretch at 91–403 (EREQIKTLNN…KLLEGEESRL (313 aa)) folds into the IF rod domain. Threonine 97 is modified (phosphothreonine). The interval 127–144 (QEQKSAKSSRLPDIFEAQ) is linker 1. A Glycyl lysine isopeptide (Lys-Gly) (interchain with G-Cter in SUMO2) cross-link involves residue lysine 130. Residues 145-236 (IAGLRGQLEA…TLNETELTEL (92 aa)) form a coil 1B region. Lysine 179 bears the N6-acetyllysine mark. The linker 12 stretch occupies residues 237–260 (QSQISDTSVVLSMDNSRSLDLDGI). Phosphoserine is present on residues serine 252 and serine 254. Positions 261-399 (IAEVKAQYEE…ATYRKLLEGE (139 aa)) are coil 2. Glycyl lysine isopeptide (Lys-Gly) (interchain with G-Cter in SUMO2) cross-links involve residues lysine 265 and lysine 286. Threonine 289 carries the post-translational modification Phosphothreonine. Residues lysine 296 and lysine 331 each participate in a glycyl lysine isopeptide (Lys-Gly) (interchain with G-Cter in SUMO2) cross-link. The tract at residues 400 to 469 (ESRLAGDGVG…ASASRRSARN (70 aa)) is tail.

Belongs to the intermediate filament family. As to quaternary structure, heterotetramer of two type I and two type II keratins. Interacts with eukaryotic translation initiator factor 3 (eIF3) subunit EIF3S10. Interacts with GPER1. Post-translationally, arg-20 is dimethylated, probably to asymmetric dimethylarginine.

Functionally, blocks interferon-dependent interphase and stimulates DNA synthesis in cells. The protein is Keratin, type II cytoskeletal 7 of Pan troglodytes (Chimpanzee).